A 278-amino-acid polypeptide reads, in one-letter code: MDYSYANVVPNFRLDGRLAIITGGSGGLAAVISRALLAQGADVALIDMNLERTKSAAKEVLGWGEETLKGEHASAIGQVSAWSCNIGDAEAVDATFSSINEHHGKIADLLINTAGYCENFPAETYPATNAESIMKVNGLGSFYVSQSFARPLIQNNLRGSIILIGSMSGTIVNDPQPQCMYNMSKAGVIHLVRSLACEWAKYNIRVNTLSPGYILTPLTRNVISGHTEMKEAWESKIPMKRMAEPKEFVGSILYLASETASSYTTGHNLVVDGGYECW.

The NADP(+) site is built by leucine 28 and asparagine 49. Serine 166 acts as the Proton donor in catalysis. 4 residues coordinate NADP(+): tyrosine 181, lysine 185, isoleucine 214, and threonine 216. Catalysis depends on tyrosine 181, which acts as the Proton acceptor. Lysine 185 serves as the catalytic Lowers pKa of active site Tyr.

The protein belongs to the short-chain dehydrogenases/reductases (SDR) family.

The catalysed reaction is D-arabinitol + NAD(+) = D-ribulose + NADH + H(+). The protein operates within carbohydrate metabolism; D-arabinitol metabolism. The sequence is that of D-arabinitol 2-dehydrogenase [ribulose-forming] (ARDH) from Scheffersomyces stipitis (strain ATCC 58785 / CBS 6054 / NBRC 10063 / NRRL Y-11545) (Yeast).